A 435-amino-acid polypeptide reads, in one-letter code: Bud site selection protein RAX1 (435 aa).

The Cytoplasmic segment spans residues 1–297 (MKEELSKVSS…PFSNHTSISR (297 aa)). Residues 159-248 (VDEIMKRRSQ…LEMDCFPKFL (90 aa)) form the RGS domain. Phosphoserine is present on Ser167. A helical transmembrane segment spans residues 298–318 (IGFGLLWLGIGFWIGYVLIFL). Residues 319-325 (AYSRAIR) lie on the Extracellular side of the membrane. Residues 326-346 (VVTVVPFTLGCYCIVCGMYQV) traverse the membrane as a helical segment. Residues 347–409 (DIVYSWFGVT…FTRQLLRKRG (63 aa)) are Cytoplasmic-facing. Residues 410 to 430 (LWCLLLVVGATAAFTVIFSCV) traverse the membrane as a helical segment. Topologically, residues 431 to 435 (PGRRV) are extracellular.

In terms of assembly, forms an heterodimeric complex with RAX2. Also interacts with BUD8 and BUD9.

The protein resides in the cell membrane. It is found in the bud neck. Its subcellular location is the bud tip. Its function is as follows. Required for the establishment of the bipolar budding pattern. Involved in selecting bud sites at both the distal and proximal poles of daughter cells as well as near previously used division sites on mother cells. The RAX1-RAX2 complex performs the asymmetric localization of the two cortical landmarks, BUD8 and BUD9, at the distal and proximal poles, respectively. In Saccharomyces cerevisiae (strain ATCC 204508 / S288c) (Baker's yeast), this protein is Bud site selection protein RAX1.